We begin with the raw amino-acid sequence, 91 residues long: UPF0213 protein NMC1807 (91 aa).

The GIY-YIG domain occupies 4-83 (SNWSVYLILC…AAQKRQLWEQ (80 aa)).

Belongs to the UPF0213 family.

The protein is UPF0213 protein NMC1807 of Neisseria meningitidis serogroup C / serotype 2a (strain ATCC 700532 / DSM 15464 / FAM18).